A 217-amino-acid polypeptide reads, in one-letter code: Thiamine-phosphate synthase (217 aa).

4-amino-2-methyl-5-(diphosphooxymethyl)pyrimidine-binding positions include 45–49 (QFRQK) and N81. Residues D82 and D101 each coordinate Mg(2+). S120 contacts 4-amino-2-methyl-5-(diphosphooxymethyl)pyrimidine. 147 to 149 (TPS) contributes to the 2-[(2R,5Z)-2-carboxy-4-methylthiazol-5(2H)-ylidene]ethyl phosphate binding site. K150 contributes to the 4-amino-2-methyl-5-(diphosphooxymethyl)pyrimidine binding site. 2-[(2R,5Z)-2-carboxy-4-methylthiazol-5(2H)-ylidene]ethyl phosphate contacts are provided by residues G179 and 197–198 (IS).

This sequence belongs to the thiamine-phosphate synthase family. Mg(2+) serves as cofactor.

The catalysed reaction is 2-[(2R,5Z)-2-carboxy-4-methylthiazol-5(2H)-ylidene]ethyl phosphate + 4-amino-2-methyl-5-(diphosphooxymethyl)pyrimidine + 2 H(+) = thiamine phosphate + CO2 + diphosphate. The enzyme catalyses 2-(2-carboxy-4-methylthiazol-5-yl)ethyl phosphate + 4-amino-2-methyl-5-(diphosphooxymethyl)pyrimidine + 2 H(+) = thiamine phosphate + CO2 + diphosphate. It carries out the reaction 4-methyl-5-(2-phosphooxyethyl)-thiazole + 4-amino-2-methyl-5-(diphosphooxymethyl)pyrimidine + H(+) = thiamine phosphate + diphosphate. It participates in cofactor biosynthesis; thiamine diphosphate biosynthesis; thiamine phosphate from 4-amino-2-methyl-5-diphosphomethylpyrimidine and 4-methyl-5-(2-phosphoethyl)-thiazole: step 1/1. In terms of biological role, condenses 4-methyl-5-(beta-hydroxyethyl)thiazole monophosphate (THZ-P) and 2-methyl-4-amino-5-hydroxymethyl pyrimidine pyrophosphate (HMP-PP) to form thiamine monophosphate (TMP). The polypeptide is Thiamine-phosphate synthase (Helicobacter pylori (strain J99 / ATCC 700824) (Campylobacter pylori J99)).